Consider the following 242-residue polypeptide: tRNA pseudouridine synthase A (242 aa).

Aspartate 51 serves as the catalytic Nucleophile. Tyrosine 107 serves as a coordination point for substrate.

This sequence belongs to the tRNA pseudouridine synthase TruA family. In terms of assembly, homodimer.

It catalyses the reaction uridine(38/39/40) in tRNA = pseudouridine(38/39/40) in tRNA. In terms of biological role, formation of pseudouridine at positions 38, 39 and 40 in the anticodon stem and loop of transfer RNAs. The chain is tRNA pseudouridine synthase A from Helicobacter pylori (strain Shi470).